Reading from the N-terminus, the 669-residue chain is Dynamin-related protein 4C (669 aa).

The disordered stretch occupies residues 1 to 21 (MVKKKVATKKNSPSLAIAKKK). A Dynamin-type G domain is found at 62–323 (GIHLPTIVVV…QSSMIARCLP (262 aa)). Residues 72-79 (GDQSSGKS) form a G1 motif region. 72 to 79 (GDQSSGKS) contributes to the GTP binding site. The segment at 97 to 99 (CTR) is G2 motif. The tract at residues 171 to 174 (DLPG) is G3 motif. Residues 171 to 175 (DLPGI) and 240 to 243 (TKAD) contribute to the GTP site. The interval 240–243 (TKAD) is G4 motif. Position 273 (E273) is a region of interest, G5 motif. In terms of domain architecture, GED spans 575–669 (AFDMKMRITS…AVAAIVDQNC (95 aa)).

This sequence belongs to the TRAFAC class dynamin-like GTPase superfamily. Dynamin/Fzo/YdjA family.

The protein localises to the cytoplasm. Its subcellular location is the cytoskeleton. Putative microtubule-associated force-producing protein, able to bind and hydrolyze GTP. The sequence is that of Dynamin-related protein 4C (DRP4C) from Arabidopsis thaliana (Mouse-ear cress).